The primary structure comprises 707 residues: Elongation factor G (707 aa).

The 289-residue stretch at 8–296 (ERYRNFGIMA…AVVDFLPAPT (289 aa)) folds into the tr-type G domain. GTP contacts are provided by residues 17–24 (AHIDAGKT), 94–98 (DTPGH), and 148–151 (NKMD).

It belongs to the TRAFAC class translation factor GTPase superfamily. Classic translation factor GTPase family. EF-G/EF-2 subfamily.

The protein resides in the cytoplasm. Functionally, catalyzes the GTP-dependent ribosomal translocation step during translation elongation. During this step, the ribosome changes from the pre-translocational (PRE) to the post-translocational (POST) state as the newly formed A-site-bound peptidyl-tRNA and P-site-bound deacylated tRNA move to the P and E sites, respectively. Catalyzes the coordinated movement of the two tRNA molecules, the mRNA and conformational changes in the ribosome. The chain is Elongation factor G from Paracoccus denitrificans (strain Pd 1222).